The sequence spans 157 residues: Endoribonuclease YbeY (157 aa).

Positions 115, 119, and 125 each coordinate Zn(2+).

Belongs to the endoribonuclease YbeY family. The cofactor is Zn(2+).

The protein localises to the cytoplasm. Single strand-specific metallo-endoribonuclease involved in late-stage 70S ribosome quality control and in maturation of the 3' terminus of the 16S rRNA. The sequence is that of Endoribonuclease YbeY from Micrococcus luteus (strain ATCC 4698 / DSM 20030 / JCM 1464 / CCM 169 / CCUG 5858 / IAM 1056 / NBRC 3333 / NCIMB 9278 / NCTC 2665 / VKM Ac-2230) (Micrococcus lysodeikticus).